The following is a 227-amino-acid chain: ATP-dependent dethiobiotin synthetase BioD (227 aa).

An ATP-binding site is contributed by Asp-13–Tyr-18. Residue Thr-17 participates in Mg(2+) binding. Residue Lys-38 is part of the active site. A substrate-binding site is contributed by Ser-42. ATP contacts are provided by residues Asp-55, Glu-116–Gly-119, and Asn-179–Asn-180. Asp-55 and Glu-116 together coordinate Mg(2+).

This sequence belongs to the dethiobiotin synthetase family. Homodimer. The cofactor is Mg(2+).

It localises to the cytoplasm. The enzyme catalyses (7R,8S)-7,8-diammoniononanoate + CO2 + ATP = (4R,5S)-dethiobiotin + ADP + phosphate + 3 H(+). It participates in cofactor biosynthesis; biotin biosynthesis; biotin from 7,8-diaminononanoate: step 1/2. Its function is as follows. Catalyzes a mechanistically unusual reaction, the ATP-dependent insertion of CO2 between the N7 and N8 nitrogen atoms of 7,8-diaminopelargonic acid (DAPA, also called 7,8-diammoniononanoate) to form a ureido ring. In Clostridium botulinum (strain 657 / Type Ba4), this protein is ATP-dependent dethiobiotin synthetase BioD.